Here is a 125-residue protein sequence, read N- to C-terminus: Large ribosomal subunit protein bL17 (125 aa).

The protein belongs to the bacterial ribosomal protein bL17 family. As to quaternary structure, part of the 50S ribosomal subunit. Contacts protein L32.

The polypeptide is Large ribosomal subunit protein bL17 (Blochmanniella floridana).